A 501-amino-acid polypeptide reads, in one-letter code: TGF-beta receptor type-1 (501 aa).

The N-terminal stretch at 1–29 is a signal peptide; sequence MEAASAALRRCLLLIVLVAAATLLPGAKA. Over 30–124 the chain is Extracellular; sequence LQCFCHLCTK…QSAGLGPVEL (95 aa). Intrachain disulfides connect C32-C50, C34-C37, C44-C67, C82-C94, and C95-C100. N-linked (GlcNAc...) asparagine glycosylation occurs at N41. A helical membrane pass occupies residues 125–145; sequence AAVIAGPVCFVCIALMLMVYI. The Cytoplasmic segment spans residues 146 to 501; sequence CHNRTVIHHR…QLSQQEGIKM (356 aa). At S163 the chain carries Phosphoserine. The region spanning 173–202 is the GS domain; it reads TTLKDLIYDMTTSGSGSGLPLLVQRTIART. A phosphothreonine; by TGFBR2 mark is found at T183 and T184. A phosphoserine; by TGFBR2 mark is found at S185, S187, and S189. Positions 191–192 match the FKBP1A-binding motif; it reads LP. Residues 203–493 enclose the Protein kinase domain; the sequence is IVLQESIGKG…LRIKKTLSQL (291 aa). Residues 209–217 and K230 each bind ATP; that span reads IGKGRFGEV. D331 functions as the Proton acceptor in the catalytic mechanism. K389 is covalently cross-linked (Glycyl lysine isopeptide (Lys-Gly) (interchain with G-Cter in SUMO)).

Belongs to the protein kinase superfamily. TKL Ser/Thr protein kinase family. TGFB receptor subfamily. In terms of assembly, homodimer; in the endoplasmic reticulum but also at the cell membrane. Heterohexamer; TGFB1, TGFB2 and TGFB3 homodimeric ligands assemble a functional receptor composed of two TGFBR1 and TGFBR2 heterodimers to form a ligand-receptor heterohexamer. The respective affinity of TGBRB1 and TGFBR2 for the ligands may modulate the kinetics of assembly of the receptor and may explain the different biological activities of TGFB1, TGFB2 and TGFB3. Component of a complex composed of TSC22D1 (via N-terminus), TGFBR1 and TGFBR2; the interaction between TSC22D1 and TGFBR1 is inhibited by SMAD7 and promoted by TGFB1. Interacts with CD109; inhibits TGF-beta receptor activation in keratinocytes. Interacts with RBPMS. Interacts with SMAD2, SMAD3 and ZFYVE9; ZFYVE9 recruits SMAD2 and SMAD3 to the TGF-beta receptor. Interacts with TRAF6 and MAP3K7; induces MAP3K7 activation by TRAF6. Interacts with PARD6A; involved in TGF-beta induced epithelial to mesenchymal transition. Interacts with NEDD4L. Interacts with SMAD7, SMURF1 and SMURF2; SMAD7 recruits NEDD4L, SMURF1 and SMURF2 to the TGF-beta receptor. Interacts with USP15 and VPS39. Interacts (unphosphorylated) with FKBP1A; prevents TGFBR1 phosphorylation by TGFBR2 and stabilizes it in the inactive conformation. Interacts with SDCBP (via C-terminus). Interacts with CAV1 and this interaction is impaired in the presence of SDCBP. Interacts with APPL1; interaction is TGF beta dependent; mediates trafficking of the TGFBR1 from the endosomes to the nucleus via microtubules in a TRAF6-dependent manner. Interacts with GPR50; this interaction promotes the constitutive activation of SMAD signaling pathway. The cofactor is Mg(2+). Requires Mn(2+) as cofactor. In terms of processing, phosphorylated at basal levels in the absence of ligand. Activated upon phosphorylation by TGFBR2, mainly in the GS domain. Phosphorylation in the GS domain abrogates FKBP1A-binding. N-Glycosylated. Post-translationally, ubiquitinated; undergoes ubiquitination catalyzed by several E3 ubiquitin ligases including SMURF1, SMURF2 and NEDD4L2. Results in the proteasomal and/or lysosomal degradation of the receptor thereby negatively regulating its activity. Deubiquitinated by USP15, leading to stabilization of the protein and enhanced TGF-beta signal. Its ubiquitination and proteasome-mediated degradation is negatively regulated by SDCBP. In terms of tissue distribution, urogenital ridge, testis, ovary, brain and lungs.

It localises to the cell membrane. The protein localises to the cell junction. It is found in the tight junction. The protein resides in the membrane raft. Its subcellular location is the cell surface. It catalyses the reaction L-threonyl-[receptor-protein] + ATP = O-phospho-L-threonyl-[receptor-protein] + ADP + H(+). The catalysed reaction is L-seryl-[receptor-protein] + ATP = O-phospho-L-seryl-[receptor-protein] + ADP + H(+). Its activity is regulated as follows. Kept in an inactive conformation by FKBP1A preventing receptor activation in absence of ligand. CD109 is another inhibitor of the receptor. Its function is as follows. Transmembrane serine/threonine kinase forming with the TGF-beta type II serine/threonine kinase receptor, TGFBR2, the non-promiscuous receptor for the TGF-beta cytokines TGFB1, TGFB2 and TGFB3. Transduces the TGFB1, TGFB2 and TGFB3 signal from the cell surface to the cytoplasm and is thus regulating a plethora of physiological and pathological processes including cell cycle arrest in epithelial and hematopoietic cells, control of mesenchymal cell proliferation and differentiation, wound healing, extracellular matrix production, immunosuppression and carcinogenesis. The formation of the receptor complex composed of 2 TGFBR1 and 2 TGFBR2 molecules symmetrically bound to the cytokine dimer results in the phosphorylation and the activation of TGFBR1 by the constitutively active TGFBR2. Activated TGFBR1 phosphorylates SMAD2 which dissociates from the receptor and interacts with SMAD4. The SMAD2-SMAD4 complex is subsequently translocated to the nucleus where it modulates the transcription of the TGF-beta-regulated genes. This constitutes the canonical SMAD-dependent TGF-beta signaling cascade. Also involved in non-canonical, SMAD-independent TGF-beta signaling pathways. For instance, TGFBR1 induces TRAF6 autoubiquitination which in turn results in MAP3K7 ubiquitination and activation to trigger apoptosis. Also regulates epithelial to mesenchymal transition through a SMAD-independent signaling pathway through PARD6A phosphorylation and activation. This chain is TGF-beta receptor type-1 (Tgfbr1), found in Rattus norvegicus (Rat).